A 214-amino-acid chain; its full sequence is Holliday junction branch migration complex subunit RuvA (214 aa).

Residues 1 to 63 are domain I; the sequence is MIASLSGTVE…EDALTLYGFA (63 aa). Positions 64 to 142 are domain II; the sequence is DRDEREVFEV…PTGEPVPGAE (79 aa). Residues 143-151 form a flexible linker region; that stretch reads AEASDEPAV. The interval 151 to 214 is domain III; sequence VETVWHADVV…GMAGAVRGGR (64 aa).

This sequence belongs to the RuvA family. In terms of assembly, homotetramer. Forms an RuvA(8)-RuvB(12)-Holliday junction (HJ) complex. HJ DNA is sandwiched between 2 RuvA tetramers; dsDNA enters through RuvA and exits via RuvB. An RuvB hexamer assembles on each DNA strand where it exits the tetramer. Each RuvB hexamer is contacted by two RuvA subunits (via domain III) on 2 adjacent RuvB subunits; this complex drives branch migration. In the full resolvosome a probable DNA-RuvA(4)-RuvB(12)-RuvC(2) complex forms which resolves the HJ.

It localises to the cytoplasm. The RuvA-RuvB-RuvC complex processes Holliday junction (HJ) DNA during genetic recombination and DNA repair, while the RuvA-RuvB complex plays an important role in the rescue of blocked DNA replication forks via replication fork reversal (RFR). RuvA specifically binds to HJ cruciform DNA, conferring on it an open structure. The RuvB hexamer acts as an ATP-dependent pump, pulling dsDNA into and through the RuvAB complex. HJ branch migration allows RuvC to scan DNA until it finds its consensus sequence, where it cleaves and resolves the cruciform DNA. In Micrococcus luteus (strain ATCC 4698 / DSM 20030 / JCM 1464 / CCM 169 / CCUG 5858 / IAM 1056 / NBRC 3333 / NCIMB 9278 / NCTC 2665 / VKM Ac-2230) (Micrococcus lysodeikticus), this protein is Holliday junction branch migration complex subunit RuvA.